Here is a 244-residue protein sequence, read N- to C-terminus: MEAAQAFENLANLEQEFGKAEIEILKKQNELFQPLFEQRRDILKTINNFWVVVLEAAGDEISQYITPEDSVLLEKLENIYVERFNEKEPRDVRISLTFQPNEYLQDDNLTLVKEVRIKEEKAKDDEGLEKKITKYTSQPVDIHWKPGKSLFRKNKKLPPNFFDYFQWTGEEEDDDFDGATLTIFLAEDLFPNAVKYFTEAMTEEASDEDESVDLEEDEEEEDEEDEEGDEEKQEPPSKKSKKSN.

A disordered region spans residues 199-244 (EAMTEEASDEDESVDLEEDEEEEDEEDEEGDEEKQEPPSKKSKKSN). Acidic residues predominate over residues 201 to 232 (MTEEASDEDESVDLEEDEEEEDEEDEEGDEEK). Ser-211 is modified (phosphoserine).

This sequence belongs to the nucleosome assembly protein (NAP) family.

It localises to the nucleus. In Schizosaccharomyces pombe (strain 972 / ATCC 24843) (Fission yeast), this protein is Putative nucleosome assembly protein C36B7.08c.